Consider the following 160-residue polypeptide: Cyclic pyranopterin monophosphate synthase (160 aa).

Substrate is bound by residues 75-77 and 113-114; these read LCH and ME. Asp128 is a catalytic residue.

This sequence belongs to the MoaC family. In terms of assembly, homohexamer; trimer of dimers.

The catalysed reaction is (8S)-3',8-cyclo-7,8-dihydroguanosine 5'-triphosphate = cyclic pyranopterin phosphate + diphosphate. Its pathway is cofactor biosynthesis; molybdopterin biosynthesis. Its function is as follows. Catalyzes the conversion of (8S)-3',8-cyclo-7,8-dihydroguanosine 5'-triphosphate to cyclic pyranopterin monophosphate (cPMP). The sequence is that of Cyclic pyranopterin monophosphate synthase from Ruthia magnifica subsp. Calyptogena magnifica.